The primary structure comprises 157 residues: NudC domain-containing protein 2 (157 aa).

N-acetylserine is present on serine 2. In terms of domain architecture, CS spans 14–104; that stretch reads CGTPWGQWYQ…DAANCWTSLL (91 aa). The disordered stretch occupies residues 134 to 157; that stretch reads FDFSGAEISGNYTKGGPDFSNLEK. Serine 142 bears the Phosphoserine mark. Residue tyrosine 145 is modified to Phosphotyrosine.

Interacts with LIS1.

Its subcellular location is the chromosome. The protein resides in the centromere. The protein localises to the kinetochore. It localises to the cytoplasm. It is found in the cytoskeleton. Its subcellular location is the microtubule organizing center. The protein resides in the centrosome. The protein localises to the spindle pole. May regulate the LIS1/dynein pathway by stabilizing LIS1 with Hsp90 chaperone. In Homo sapiens (Human), this protein is NudC domain-containing protein 2 (NUDCD2).